The sequence spans 505 residues: Maturase K (505 aa).

It belongs to the intron maturase 2 family. MatK subfamily.

Its subcellular location is the plastid. The protein resides in the chloroplast. Usually encoded in the trnK tRNA gene intron. Probably assists in splicing its own and other chloroplast group II introns. This is Maturase K from Chiococca alba (West Indian milkberry).